Here is a 128-residue protein sequence, read N- to C-terminus: Phycoerythrin alpha-3 chain, chloroplastic (128 aa).

The transit peptide at 1 to 52 (MFAKTLASLAVIGSAAAYVPMMSMDMGRREVVQAGAAAAAVTPFLSGAPAGA) directs the protein to the chloroplast. Residue K56 is modified to 5-hydroxylysine. Residues 70-89 (GCSRAPKESTGGKAGGQDDE) are disordered. 15,16-dihydrobiliverdin contacts are provided by residues C71, R73, 77 to 78 (ES), and K93.

Belongs to the phycoerythrin family. Heterotetramer of 2 different alpha chains and 2 identical beta chains. The subunit composition could comprise of any combination of 2 out of 4 different alpha units with an invariant beta unit. Post-translationally, contains one covalently linked 15,16-dihydrobiliverdin chromophore.

It localises to the plastid. Its subcellular location is the chloroplast thylakoid membrane. Functionally, light-harvesting photosynthetic tetrapyrrole chromophore-protein from the phycobiliprotein complex. The sequence is that of Phycoerythrin alpha-3 chain, chloroplastic (cpeA3) from Rhodomonas sp. (strain CS 24) (Chroomonas sp. (strain CS24)).